Consider the following 144-residue polypeptide: MLLPKRVKYRRQHRPKTTGRSKGGNYVTFGEYGLQATTTSWITSRQIESARIAMTRYMKRGGKVWIKIFPHTPYTKKPLEVRMGAGKGAVEGWIAVVKPGRILFEVAGVSEEVAREALRLASHKLPVKTKFVKREELGGETNES.

A compositionally biased stretch (basic residues) spans 1 to 19 (MLLPKRVKYRRQHRPKTTG). The tract at residues 1-23 (MLLPKRVKYRRQHRPKTTGRSKG) is disordered.

The protein belongs to the universal ribosomal protein uL16 family. In terms of assembly, part of the 50S ribosomal subunit.

Binds 23S rRNA and is also seen to make contacts with the A and possibly P site tRNAs. This is Large ribosomal subunit protein uL16 from Staphylococcus haemolyticus (strain JCSC1435).